Here is a 367-residue protein sequence, read N- to C-terminus: DNA replication and repair protein RecF (367 aa).

30–37 (GDNAQGKT) lines the ATP pocket.

This sequence belongs to the RecF family.

It localises to the cytoplasm. In terms of biological role, the RecF protein is involved in DNA metabolism; it is required for DNA replication and normal SOS inducibility. RecF binds preferentially to single-stranded, linear DNA. It also seems to bind ATP. In Clostridium beijerinckii (strain ATCC 51743 / NCIMB 8052) (Clostridium acetobutylicum), this protein is DNA replication and repair protein RecF.